We begin with the raw amino-acid sequence, 314 residues long: Methionyl-tRNA formyltransferase (314 aa).

Residue 109–112 coordinates (6S)-5,6,7,8-tetrahydrofolate; that stretch reads SLLP.

Belongs to the Fmt family.

It catalyses the reaction L-methionyl-tRNA(fMet) + (6R)-10-formyltetrahydrofolate = N-formyl-L-methionyl-tRNA(fMet) + (6S)-5,6,7,8-tetrahydrofolate + H(+). Functionally, attaches a formyl group to the free amino group of methionyl-tRNA(fMet). The formyl group appears to play a dual role in the initiator identity of N-formylmethionyl-tRNA by promoting its recognition by IF2 and preventing the misappropriation of this tRNA by the elongation apparatus. This is Methionyl-tRNA formyltransferase from Alkaliphilus metalliredigens (strain QYMF).